The primary structure comprises 91 residues: Uteroglobin (91 aa).

The N-terminal stretch at 1-21 is a signal peptide; it reads MKLAITLALVTLALLCSPASA.

It belongs to the secretoglobin family. In terms of assembly, antiparallel homodimer; disulfide-linked. Interaction with LMBR1L is controversial. Synthesized in the uterus and lung.

It localises to the secreted. In terms of biological role, uteroglobin binds progesterone specifically and with high affinity. It may regulate progesterone concentrations reaching the blastocyst. It is also a potent inhibitor of phospholipase A2. The polypeptide is Uteroglobin (SCGB1A1) (Oryctolagus cuniculus (Rabbit)).